A 538-amino-acid polypeptide reads, in one-letter code: Chaperonin GroEL 1 (538 aa).

ATP contacts are provided by residues 29 to 32 (TLGP), 86 to 90 (DGTTT), Gly413, 478 to 480 (NAA), and Asp494.

The protein belongs to the chaperonin (HSP60) family. As to quaternary structure, forms a cylinder of 14 subunits composed of two heptameric rings stacked back-to-back. Interacts with the co-chaperonin GroES.

Its subcellular location is the cytoplasm. It catalyses the reaction ATP + H2O + a folded polypeptide = ADP + phosphate + an unfolded polypeptide.. Its function is as follows. Together with its co-chaperonin GroES, plays an essential role in assisting protein folding. The GroEL-GroES system forms a nano-cage that allows encapsulation of the non-native substrate proteins and provides a physical environment optimized to promote and accelerate protein folding. In Corynebacterium glutamicum (strain R), this protein is Chaperonin GroEL 1.